We begin with the raw amino-acid sequence, 297 residues long: MKNTCSTNWKHHPAKYELIGLMAYPIRHSLSPEMQNKALEKAGLPFTYMAFEVDNDSFPGAIEGLKALKMRGTGVSMPNKQLACEYVDELTPAAKLVGAINTIVNDDGYLRGYNTDGTGHIRAIKESGFDIKGKTMVLLGAGGASTAIGAQGAIEGLKEIKLFNRRDEFFDKALAFAQRVNENTDCVVTVTDLADQQAFAEALASDDILTNGTKVGMKPLENKSLVNDISLLHPGLLVTECVYNPHMTKLLQQAQQAGCKTIDGYGMLLWQGAEQFTLWTGKDFPLEYVKQVMGFGA.

2 residues coordinate substrate: Lys-80 and Asp-116. Residues 141-144 (AGGA), 164-167 (NRRD), Lys-214, 241-244 (CVYN), and Gly-264 contribute to the NAD(+) site.

Belongs to the shikimate dehydrogenase family. Homodimer.

The enzyme catalyses L-quinate + NAD(+) = 3-dehydroquinate + NADH + H(+). It catalyses the reaction L-quinate + NADP(+) = 3-dehydroquinate + NADPH + H(+). The catalysed reaction is shikimate + NADP(+) = 3-dehydroshikimate + NADPH + H(+). It carries out the reaction shikimate + NAD(+) = 3-dehydroshikimate + NADH + H(+). Its pathway is metabolic intermediate biosynthesis; chorismate biosynthesis; chorismate from D-erythrose 4-phosphate and phosphoenolpyruvate: step 4/7. The actual biological function of YdiB remains unclear, nor is it known whether 3-dehydroshikimate or quinate represents the natural substrate. Catalyzes the reversible NAD-dependent reduction of both 3-dehydroshikimate (DHSA) and 3-dehydroquinate to yield shikimate (SA) and quinate, respectively. It can use both NAD or NADP for catalysis, however it has higher catalytic efficiency with NAD. This chain is Quinate/shikimate dehydrogenase, found in Shigella dysenteriae serotype 1 (strain Sd197).